Reading from the N-terminus, the 398-residue chain is MSKLVLVLNCGSSSLKFAVVDAENGAEHLSGLAECLHLPEARIKWKLDGKHEAQLGNGAAHEEALAFMVETILASKPELSENLAAIGHRVVHGGEQFTQSALITDEVLKGIEDCATLAPLHNPAHIIGIKAAQKSFPALKNVAVFDTAFHQTMPEEAYLYALPYNLYKEHGIRRYGMHGTSHLFITREVASLLNKPVEEVNIINCHLGNGASVCAVKNGQSVDTSMGLTPLEGLVMGTRCGDIDPAIIFHLHDTLGYSVEKINTMLTKESGLAGLTEVTSDCRFVEDNYGQKEEATRAMDVFCHRLAKYVAGYTATLEGRLDAITFTGGIGENSAPIREMVLNRLGIFGIEVDSEANLKARFGGEGVITTANSRIPAMVISTNEELVIAEDTARLAGL.

N9 provides a ligand contact to Mg(2+). K16 contributes to the ATP binding site. R89 provides a ligand contact to substrate. D146 serves as the catalytic Proton donor/acceptor. Residues 206-210 (HLGNG), 281-283 (DCR), and 329-333 (GIGEN) contribute to the ATP site. E384 is a binding site for Mg(2+).

Belongs to the acetokinase family. As to quaternary structure, homodimer. It depends on Mg(2+) as a cofactor. The cofactor is Mn(2+).

Its subcellular location is the cytoplasm. The catalysed reaction is acetate + ATP = acetyl phosphate + ADP. The protein operates within metabolic intermediate biosynthesis; acetyl-CoA biosynthesis; acetyl-CoA from acetate: step 1/2. Its function is as follows. Catalyzes the formation of acetyl phosphate from acetate and ATP. Can also catalyze the reverse reaction. The sequence is that of Acetate kinase 1 from Vibrio vulnificus (strain CMCP6).